Reading from the N-terminus, the 316-residue chain is Ribosomal protein L11 methyltransferase (316 aa).

Residues threonine 157, glycine 178, aspartate 200, and asparagine 243 each coordinate S-adenosyl-L-methionine.

This sequence belongs to the methyltransferase superfamily. PrmA family.

Its subcellular location is the cytoplasm. The enzyme catalyses L-lysyl-[protein] + 3 S-adenosyl-L-methionine = N(6),N(6),N(6)-trimethyl-L-lysyl-[protein] + 3 S-adenosyl-L-homocysteine + 3 H(+). In terms of biological role, methylates ribosomal protein L11. The protein is Ribosomal protein L11 methyltransferase of Streptococcus pneumoniae (strain Hungary19A-6).